The sequence spans 362 residues: Holliday junction branch migration complex subunit RuvB (362 aa).

The segment at 1–27 is disordered; that stretch reads MANIEKTEFHVPAPVSAAGNQKSSLGN. Residues 13–206 form a large ATPase domain (RuvB-L) region; it reads APVSAAGNQK…FGFTAQMEFY (194 aa). ATP-binding positions include L45, R46, G87, K90, T91, T92, 153-155, R196, Y206, and R243; that span reads EDF. Mg(2+) is bound at residue T91. The small ATPAse domain (RuvB-S) stretch occupies residues 207-277; it reads EVEDLTKVVV…AAQAALVVFD (71 aa). A head domain (RuvB-H) region spans residues 280 to 362; that stretch reads EMGLDRLDRA…EPPEGIIGSL (83 aa). DNA-binding residues include R335 and R340.

The protein belongs to the RuvB family. In terms of assembly, homohexamer. Forms an RuvA(8)-RuvB(12)-Holliday junction (HJ) complex. HJ DNA is sandwiched between 2 RuvA tetramers; dsDNA enters through RuvA and exits via RuvB. An RuvB hexamer assembles on each DNA strand where it exits the tetramer. Each RuvB hexamer is contacted by two RuvA subunits (via domain III) on 2 adjacent RuvB subunits; this complex drives branch migration. In the full resolvosome a probable DNA-RuvA(4)-RuvB(12)-RuvC(2) complex forms which resolves the HJ.

Its subcellular location is the cytoplasm. It catalyses the reaction ATP + H2O = ADP + phosphate + H(+). Functionally, the RuvA-RuvB-RuvC complex processes Holliday junction (HJ) DNA during genetic recombination and DNA repair, while the RuvA-RuvB complex plays an important role in the rescue of blocked DNA replication forks via replication fork reversal (RFR). RuvA specifically binds to HJ cruciform DNA, conferring on it an open structure. The RuvB hexamer acts as an ATP-dependent pump, pulling dsDNA into and through the RuvAB complex. RuvB forms 2 homohexamers on either side of HJ DNA bound by 1 or 2 RuvA tetramers; 4 subunits per hexamer contact DNA at a time. Coordinated motions by a converter formed by DNA-disengaged RuvB subunits stimulates ATP hydrolysis and nucleotide exchange. Immobilization of the converter enables RuvB to convert the ATP-contained energy into a lever motion, pulling 2 nucleotides of DNA out of the RuvA tetramer per ATP hydrolyzed, thus driving DNA branch migration. The RuvB motors rotate together with the DNA substrate, which together with the progressing nucleotide cycle form the mechanistic basis for DNA recombination by continuous HJ branch migration. Branch migration allows RuvC to scan DNA until it finds its consensus sequence, where it cleaves and resolves cruciform DNA. In Corynebacterium diphtheriae (strain ATCC 700971 / NCTC 13129 / Biotype gravis), this protein is Holliday junction branch migration complex subunit RuvB.